A 764-amino-acid chain; its full sequence is 5-methyltetrahydropteroyltriglutamate--homocysteine methyltransferase (764 aa).

5-methyltetrahydropteroyltri-L-glutamate contacts are provided by residues 16–19 and K115; that span reads RELK. Residues 435-437 and E488 contribute to the L-homocysteine site; that span reads IGS. L-methionine-binding positions include 435 to 437 and E488; that span reads IGS. 5-methyltetrahydropteroyltri-L-glutamate is bound by residues 519 to 520 and W565; that span reads RC. D603 is an L-homocysteine binding site. D603 contacts L-methionine. A 5-methyltetrahydropteroyltri-L-glutamate-binding site is contributed by E609. Residues H645, C647, and E669 each coordinate Zn(2+). The active-site Proton donor is the H698. C730 is a Zn(2+) binding site.

It belongs to the vitamin-B12 independent methionine synthase family. The cofactor is Zn(2+).

It carries out the reaction 5-methyltetrahydropteroyltri-L-glutamate + L-homocysteine = tetrahydropteroyltri-L-glutamate + L-methionine. It participates in amino-acid biosynthesis; L-methionine biosynthesis via de novo pathway; L-methionine from L-homocysteine (MetE route): step 1/1. In terms of biological role, catalyzes the transfer of a methyl group from 5-methyltetrahydrofolate to homocysteine resulting in methionine formation. This chain is 5-methyltetrahydropteroyltriglutamate--homocysteine methyltransferase, found in Burkholderia pseudomallei (strain 668).